A 117-amino-acid polypeptide reads, in one-letter code: Large ribosomal subunit protein uL18 (117 aa).

It belongs to the universal ribosomal protein uL18 family. In terms of assembly, part of the 50S ribosomal subunit; part of the 5S rRNA/L5/L18/L25 subcomplex. Contacts the 5S and 23S rRNAs.

In terms of biological role, this is one of the proteins that bind and probably mediate the attachment of the 5S RNA into the large ribosomal subunit, where it forms part of the central protuberance. This is Large ribosomal subunit protein uL18 from Methylococcus capsulatus (strain ATCC 33009 / NCIMB 11132 / Bath).